The sequence spans 238 residues: Ribonuclease HII (238 aa).

Residues glycine 12–leucine 197 enclose the RNase H type-2 domain. A divalent metal cation-binding residues include aspartate 18, glutamate 19, and aspartate 107.

It belongs to the RNase HII family. Mn(2+) is required as a cofactor. The cofactor is Mg(2+).

The protein resides in the cytoplasm. The enzyme catalyses Endonucleolytic cleavage to 5'-phosphomonoester.. Functionally, endonuclease that specifically degrades the RNA of RNA-DNA hybrids. In Thermotoga maritima (strain ATCC 43589 / DSM 3109 / JCM 10099 / NBRC 100826 / MSB8), this protein is Ribonuclease HII (rnhB).